The primary structure comprises 408 residues: uncharacterized protein (408 aa).

2 disordered regions span residues 218 to 265 (EPTA…TSER) and 367 to 408 (MESE…ETPN). Low complexity predominate over residues 369-379 (SEVINSSSSTS). The segment covering 394–408 (IVEEVPETAENETPN) has biased composition (acidic residues).

To C.elegans C05E11.1.

This is an uncharacterized protein from Arabidopsis thaliana (Mouse-ear cress).